Here is a 296-residue protein sequence, read N- to C-terminus: MDEQSLRKMVEQMVEQMVGGGTNVKSTTSTSSVGQGSATAISSECLPDITKIDIKSWFLLDHAKNKEEYLHMKSKTPARLGVGRAGARYKTMTMLRVRADHAAAQDAVFSDVSEEFIKKNKFVFVKTLCKDKDEYLTRPDLGRRFGKEELEVIKKTCGQSPKVLIIVGDGLSSSAIEANVEDMIPAIKQGLSMFQINVPPILFIKYARVGAMDDIGQATDADVICMLVGERPGLVTAESMSAYICYKAKHGVPESKRTVISNIHRGGTTPVEAGAHAAELIKKMLDKKASGIELKG.

2 residues coordinate adenosylcob(III)alamin: Val-209 and Glu-230.

The protein belongs to the EutC family. As to quaternary structure, the basic unit is a heterodimer which dimerizes to form tetramers. The heterotetramers trimerize; 6 large subunits form a core ring with 6 small subunits projecting outwards. It depends on adenosylcob(III)alamin as a cofactor.

Its subcellular location is the bacterial microcompartment. The catalysed reaction is ethanolamine = acetaldehyde + NH4(+). The protein operates within amine and polyamine degradation; ethanolamine degradation. Functionally, catalyzes the deamination of various vicinal amino-alcohols to oxo compounds. Allows this organism to utilize ethanolamine as the sole source of nitrogen and carbon in the presence of external vitamin B12. The polypeptide is Ethanolamine ammonia-lyase small subunit (Lachnoclostridium phytofermentans (strain ATCC 700394 / DSM 18823 / ISDg) (Clostridium phytofermentans)).